The sequence spans 599 residues: UvrABC system protein C (599 aa).

In terms of domain architecture, GIY-YIG spans 15-93; sequence EKPGCYQYFD…IKEYQPRYNV (79 aa). Residues 207-242 enclose the UVR domain; that stretch reads HRLVRMYRDRMQVYSEGLRFEEAQICKERIELLERY.

This sequence belongs to the UvrC family. Interacts with UvrB in an incision complex.

The protein localises to the cytoplasm. Functionally, the UvrABC repair system catalyzes the recognition and processing of DNA lesions. UvrC both incises the 5' and 3' sides of the lesion. The N-terminal half is responsible for the 3' incision and the C-terminal half is responsible for the 5' incision. The sequence is that of UvrABC system protein C from Porphyromonas gingivalis (strain ATCC BAA-308 / W83).